Reading from the N-terminus, the 358-residue chain is Heterogeneous nuclear ribonucleoprotein A2 homolog 2 (358 aa).

RRM domains lie at 9–92 (RKLF…ESAK) and 100–179 (KKLF…LSKQ). Disordered regions lie at residues 182-217 (QDVQ…FRGG) and 333-358 (YGGG…RNRY). The segment covering 193–217 (GNFGFGDSRGGGNFGSGPGGNFRGG) has biased composition (gly residues). Residues 309-352 (QQSSSYGPMKSGGNFGGNRSMGGPYGGGNYGPGNGSGASGGGGY) form a nuclear targeting sequence region.

Its subcellular location is the nucleus. Forms complexes (ribonucleosomes) with at least 20 other different hnRNP and heterogeneous nuclear RNA in the nucleus. The protein is Heterogeneous nuclear ribonucleoprotein A2 homolog 2 of Xenopus laevis (African clawed frog).